The sequence spans 314 residues: Endo-beta-N-acetylglucosaminidase (314 aa).

An N-terminal signal peptide occupies residues 1 to 47; that stretch reads MQFGIVAAIADGGRTARAGGSVRPPRRPPASHTAWGLPRGRPTGQPH. The tract at residues 14–54 is disordered; it reads RTARAGGSVRPPRRPPASHTAWGLPRGRPTGQPHATPTKSG. The GH18 domain maps to 55-309; that stretch reads PTSIAYVEVN…SSMTKVLYGQ (255 aa). The Proton donor role is filled by glutamate 175.

This sequence belongs to the glycosyl hydrolase 18 family. Monomer.

It localises to the secreted. The enzyme catalyses an N(4)-(oligosaccharide-(1-&gt;3)-[oligosaccharide-(1-&gt;6)]-beta-D-Man-(1-&gt;4)-beta-D-GlcNAc-(1-&gt;4)-alpha-D-GlcNAc)-L-asparaginyl-[protein] + H2O = an oligosaccharide-(1-&gt;3)-[oligosaccharide-(1-&gt;6)]-beta-D-Man-(1-&gt;4)-D-GlcNAc + N(4)-(N-acetyl-beta-D-glucosaminyl)-L-asparaginyl-[protein]. Functionally, cleaves asparagine-linked oligomannose and hybrid, but not complex, oligosaccharides from glycoproteins. The chain is Endo-beta-N-acetylglucosaminidase from Flavobacterium sp. (strain SK1022).